The sequence spans 317 residues: Ribose-phosphate pyrophosphokinase A (317 aa).

Residues Asp-130, His-132, and Asp-145 each contribute to the Mg(2+) site. The tract at residues 212–227 is binding of phosphoribosylpyrophosphate; sequence KDKVALIVDDMADTCG.

It belongs to the ribose-phosphate pyrophosphokinase family. Requires Mg(2+) as cofactor.

It catalyses the reaction D-ribose 5-phosphate + ATP = 5-phospho-alpha-D-ribose 1-diphosphate + AMP + H(+). It participates in metabolic intermediate biosynthesis; 5-phospho-alpha-D-ribose 1-diphosphate biosynthesis; 5-phospho-alpha-D-ribose 1-diphosphate from D-ribose 5-phosphate (route I): step 1/1. The polypeptide is Ribose-phosphate pyrophosphokinase A (prsA) (Dictyostelium discoideum (Social amoeba)).